The primary structure comprises 579 residues: Nuclear hormone receptor family member nhr-71 (579 aa).

A DNA-binding region (nuclear receptor) is located at residues 8–83 (SQECMVCSAP…AGMKIGAVQP (76 aa)). NR C4-type zinc fingers lie at residues 11 to 31 (CMVCSAPADGLHYGAISCRSC) and 47 to 71 (CKHTNTCLIDPDGRCACRSCRFTKC). Disordered regions lie at residues 82-124 (QPRR…SDGP) and 168-189 (EPIPSTSSAPEKQSCQSSPNDD). 2 stretches are compositionally biased toward polar residues: residues 106–124 (SMNNSPLERNGNSFSSDGP) and 171–186 (PSTSSAPEKQSCQSSP). An NR LBD domain is found at 189–452 (DEQQEFNHLV…KFWYETLCYA (264 aa)).

It belongs to the nuclear hormone receptor family.

The protein resides in the nucleus. Its function is as follows. Orphan nuclear receptor. This chain is Nuclear hormone receptor family member nhr-71 (nhr-71), found in Caenorhabditis elegans.